We begin with the raw amino-acid sequence, 488 residues long: 1-hydroxycarotenoid 3,4-desaturase (488 aa).

FAD-binding positions include glutamate 31, lysine 39, serine 55–leucine 56, valine 247, asparagine 275, leucine 431, glycine 461, and glycine 468–isoleucine 469.

The protein belongs to the carotenoid/retinoid oxidoreductase family. In terms of assembly, monomer.

The catalysed reaction is rhodopin + A = (3E)-3,4-didehydrorhodopin + AH2. It catalyses the reaction 1'-hydroxy-gamma-carotene + A = 1'-hydroxytorulene + AH2. The enzyme catalyses 1-hydroxy-all-trans-1,2-dihydro-neurosporene + A = demethylspheroidene + AH2. It carries out the reaction 1,1'-dihydroxy-1,1',2,2'-tetrahydroneurosporene + A = 1'-hydroxy-demethylspheroidene + AH2. The catalysed reaction is 1,1'-dihydroxy-1,1',2,2'-tetrahydrolycopene + A = 1,1'-dihydroxy-3,4-didehydro-1,2-dihydrolycopene + AH2. It participates in carotenoid biosynthesis. Its function is as follows. Catalyzes the introduction of a C-3,4 double bond into 1'-hydroxy-gamma-carotene and rhodopin (1-hydroxylycopene) to yield 1'-hydroxytorulene and (3E)-3,4-didehydrorhodopin, respectively. Can also 1-hydroxy-all-trans-1,2-dihydro-neurosporene, 1,1'-dihydroxy-1,1',2,2'-tetrahydroneurosporene and 1,1'-dihydroxy-1,1',2,2'-tetrahydrolycopene. Probably involved in the synthesis of myxol, a gamma-carotene derivative. May use FAD as a proton acceptor. This Flavobacterium sp. (strain P99-3) protein is 1-hydroxycarotenoid 3,4-desaturase.